The primary structure comprises 234 residues: Large ribosomal subunit protein uL1 (234 aa).

This sequence belongs to the universal ribosomal protein uL1 family. Part of the 50S ribosomal subunit.

Functionally, binds directly to 23S rRNA. The L1 stalk is quite mobile in the ribosome, and is involved in E site tRNA release. Its function is as follows. Protein L1 is also a translational repressor protein, it controls the translation of the L11 operon by binding to its mRNA. The polypeptide is Large ribosomal subunit protein uL1 (Bartonella tribocorum (strain CIP 105476 / IBS 506)).